The chain runs to 456 residues: Bifunctional protein GlmU (456 aa).

The pyrophosphorylase stretch occupies residues 1–229 (MSSHAMSVVI…LSEVEGVNNR (229 aa)). UDP-N-acetyl-alpha-D-glucosamine is bound by residues 11-14 (LAAG), Lys-25, Gln-76, 81-82 (GT), 103-105 (YGD), Gly-140, Glu-154, Asn-169, and Asn-227. Position 105 (Asp-105) interacts with Mg(2+). Asn-227 contributes to the Mg(2+) binding site. The linker stretch occupies residues 230 to 250 (LQLARLEHVYQAEQAEKLLLA). An N-acetyltransferase region spans residues 251-456 (GVMLRDPARF…QGWRRPVKKK (206 aa)). UDP-N-acetyl-alpha-D-glucosamine contacts are provided by Arg-333 and Lys-351. Residue His-363 is the Proton acceptor of the active site. UDP-N-acetyl-alpha-D-glucosamine contacts are provided by Tyr-366 and Asn-377. Acetyl-CoA contacts are provided by residues Ala-380, 386-387 (NY), Ser-405, Ala-423, and Arg-440.

In the N-terminal section; belongs to the N-acetylglucosamine-1-phosphate uridyltransferase family. The protein in the C-terminal section; belongs to the transferase hexapeptide repeat family. In terms of assembly, homotrimer. Mg(2+) serves as cofactor.

Its subcellular location is the cytoplasm. The enzyme catalyses alpha-D-glucosamine 1-phosphate + acetyl-CoA = N-acetyl-alpha-D-glucosamine 1-phosphate + CoA + H(+). It catalyses the reaction N-acetyl-alpha-D-glucosamine 1-phosphate + UTP + H(+) = UDP-N-acetyl-alpha-D-glucosamine + diphosphate. Its pathway is nucleotide-sugar biosynthesis; UDP-N-acetyl-alpha-D-glucosamine biosynthesis; N-acetyl-alpha-D-glucosamine 1-phosphate from alpha-D-glucosamine 6-phosphate (route II): step 2/2. It functions in the pathway nucleotide-sugar biosynthesis; UDP-N-acetyl-alpha-D-glucosamine biosynthesis; UDP-N-acetyl-alpha-D-glucosamine from N-acetyl-alpha-D-glucosamine 1-phosphate: step 1/1. The protein operates within bacterial outer membrane biogenesis; LPS lipid A biosynthesis. Its function is as follows. Catalyzes the last two sequential reactions in the de novo biosynthetic pathway for UDP-N-acetylglucosamine (UDP-GlcNAc). The C-terminal domain catalyzes the transfer of acetyl group from acetyl coenzyme A to glucosamine-1-phosphate (GlcN-1-P) to produce N-acetylglucosamine-1-phosphate (GlcNAc-1-P), which is converted into UDP-GlcNAc by the transfer of uridine 5-monophosphate (from uridine 5-triphosphate), a reaction catalyzed by the N-terminal domain. This is Bifunctional protein GlmU from Cronobacter sakazakii (strain ATCC BAA-894) (Enterobacter sakazakii).